The following is a 100-amino-acid chain: Urease subunit gamma (100 aa).

It belongs to the urease gamma subunit family. In terms of assembly, heterotrimer of UreA (gamma), UreB (beta) and UreC (alpha) subunits. Three heterotrimers associate to form the active enzyme.

It localises to the cytoplasm. It carries out the reaction urea + 2 H2O + H(+) = hydrogencarbonate + 2 NH4(+). It functions in the pathway nitrogen metabolism; urea degradation; CO(2) and NH(3) from urea (urease route): step 1/1. The protein is Urease subunit gamma of Nocardia farcinica (strain IFM 10152).